A 403-amino-acid polypeptide reads, in one-letter code: L-lactate oxidase (403 aa).

In terms of domain architecture, FMN hydroxy acid dehydrogenase spans 21-375; sequence EGSVDFVNVF…KHFKLRHNPY (355 aa). Residue tyrosine 47 participates in pyruvate binding. FMN-binding positions include 99–101, serine 128, and glutamine 150; that span reads PVA. Position 152 (tyrosine 152) interacts with pyruvate. Threonine 178 lines the FMN pocket. Residues arginine 187 and tyrosine 220 each contribute to the pyruvate site. Lysine 246 lines the FMN pocket. Pyruvate-binding residues include histidine 270 and arginine 273. Residue histidine 270 is the Proton acceptor of the active site. FMN-binding positions include 301 to 305 and arginine 325; that span reads DSGVR.

This sequence belongs to the FMN-dependent alpha-hydroxy acid dehydrogenase family. Homotetramer. It depends on FMN as a cofactor.

It carries out the reaction (S)-lactate + O2 = pyruvate + H2O2. Functionally, catalyzes the oxidation of (S)-lactate (L-lactate) to pyruvate, with a reduction of O2 to H2O2. Is likely involved in the L-lactate aerobic metabolism of S.iniae that enables the bacterium to utilize L-lactate as an energy source for growth under aerobic conditions in the absence (or at low concentrations) of glucose. This is L-lactate oxidase from Streptococcus iniae (Streptococcus shiloi).